A 520-amino-acid chain; its full sequence is Leucine carboxyl methyltransferase 1 (520 aa).

2 disordered regions span residues 1-116 and 142-174; these read MQRD…DDAV and TQEF…SIRR. Low complexity predominate over residues 79–89; that stretch reads PSLRLSLGLPR. 2 stretches are compositionally biased toward polar residues: residues 95–110 and 142–151; these read HSGQ…STAR and TQEFSSTLPS. Residues arginine 185, glycine 210, aspartate 237, 305–306, and glutamate 343 contribute to the S-adenosyl-L-methionine site; that span reads DV.

It belongs to the methyltransferase superfamily. LCMT family.

It catalyses the reaction [phosphatase 2A protein]-C-terminal L-leucine + S-adenosyl-L-methionine = [phosphatase 2A protein]-C-terminal L-leucine methyl ester + S-adenosyl-L-homocysteine. Methylates the carboxyl group of the C-terminal leucine residue of protein phosphatase 2A catalytic subunits to form alpha-leucine ester residues. This Mycosarcoma maydis (Corn smut fungus) protein is Leucine carboxyl methyltransferase 1 (PPM1).